A 433-amino-acid chain; its full sequence is Xylose isomerase (433 aa).

Residues histidine 97 and aspartate 100 contribute to the active site. The Mg(2+) site is built by glutamate 228, glutamate 264, histidine 267, aspartate 292, aspartate 303, aspartate 305, and aspartate 334.

This sequence belongs to the xylose isomerase family. As to quaternary structure, homotetramer. It depends on Mg(2+) as a cofactor.

The protein resides in the cytoplasm. It carries out the reaction alpha-D-xylose = alpha-D-xylulofuranose. This chain is Xylose isomerase, found in Fervidobacterium gondwanense.